The following is a 144-amino-acid chain: Large ribosomal subunit protein uL15 (144 aa).

The disordered stretch occupies residues M1–Q54. The segment covering R21–G31 has biased composition (gly residues).

The protein belongs to the universal ribosomal protein uL15 family. As to quaternary structure, part of the 50S ribosomal subunit.

Its function is as follows. Binds to the 23S rRNA. The polypeptide is Large ribosomal subunit protein uL15 (Klebsiella pneumoniae (strain 342)).